A 379-amino-acid chain; its full sequence is F-box protein At1g30200 (379 aa).

One can recognise an F-box domain in the interval 24–72; it reads DHFDLLPDSLLLLIFDKVADVKDLGRCCIVSRRFHSLVPFVENVLVRVD.

The polypeptide is F-box protein At1g30200 (Arabidopsis thaliana (Mouse-ear cress)).